The sequence spans 290 residues: Dual-specificity RNA pseudouridine synthase RluF (290 aa).

The S4 RNA-binding domain maps to Val-7–Leu-72. Interaction with RNA regions lie at residues Arg-105–Lys-108 and Arg-187–Arg-190. Asp-107 (nucleophile) is an active-site residue. The tract at residues Val-243–Arg-290 is disordered. Basic and acidic residues predominate over residues Val-261–Gly-271.

It belongs to the pseudouridine synthase RsuA family. Monomer.

It catalyses the reaction uridine(2604) in 23S rRNA = pseudouridine(2604) in 23S rRNA. The catalysed reaction is uridine(35) in tRNA(Tyr) = pseudouridine(35) in tRNA(Tyr). Its function is as follows. Dual specificity enzyme that catalyzes the synthesis of pseudouridine from uracil-2604 in 23S ribosomal RNA and from uracil-35 in the anticodon of tRNA(Tyr). Can, to a small extent, also react with uracil-2605. The polypeptide is Dual-specificity RNA pseudouridine synthase RluF (rluF) (Escherichia coli (strain K12)).